Here is a 212-residue protein sequence, read N- to C-terminus: Protein Thf1 (212 aa).

Positions 179–201 (ERMEQAVELMQETLAADRRKKEK) form a coiled coil.

This sequence belongs to the THF1 family.

Functionally, may be involved in photosynthetic membrane biogenesis. The sequence is that of Protein Thf1 from Parasynechococcus marenigrum (strain WH8102).